The primary structure comprises 642 residues: Threonine--tRNA ligase (642 aa).

The TGS domain occupies 1–61; the sequence is MPVITLPDGS…ENDAQLSIIT (61 aa). Residues 243 to 534 form a catalytic region; it reads DHRKIGKQLD…LTEEFAGFFP (292 aa). Residue Lys286 is modified to N6-acetyllysine. Zn(2+)-binding residues include Cys334, His385, and His511.

It belongs to the class-II aminoacyl-tRNA synthetase family. In terms of assembly, homodimer. Zn(2+) is required as a cofactor.

The protein resides in the cytoplasm. The catalysed reaction is tRNA(Thr) + L-threonine + ATP = L-threonyl-tRNA(Thr) + AMP + diphosphate + H(+). Functionally, catalyzes the attachment of threonine to tRNA(Thr) in a two-step reaction: L-threonine is first activated by ATP to form Thr-AMP and then transferred to the acceptor end of tRNA(Thr). Also edits incorrectly charged L-seryl-tRNA(Thr). The chain is Threonine--tRNA ligase from Escherichia coli O157:H7.